The primary structure comprises 251 residues: Probable transcriptional regulatory protein CC_3243 (251 aa).

The protein belongs to the TACO1 family.

Its subcellular location is the cytoplasm. This is Probable transcriptional regulatory protein CC_3243 from Caulobacter vibrioides (strain ATCC 19089 / CIP 103742 / CB 15) (Caulobacter crescentus).